A 181-amino-acid chain; its full sequence is Mediator of RNA polymerase II transcription subunit 19 (181 aa).

The interval 120–181 (GMPGPGKPGI…TDGERRRKRK (62 aa)) is disordered. The span at 122–133 (PGPGKPGIGPQV) shows a compositional bias: gly residues. A compositionally biased stretch (polar residues) spans 143-158 (RSYNTESARESSNNEE).

The protein belongs to the Mediator complex subunit 19 family. Component of the Mediator complex.

The protein localises to the nucleus. Component of the Mediator complex, a coactivator involved in the regulated transcription of nearly all RNA polymerase II-dependent genes. Mediator functions as a bridge to convey information from gene-specific regulatory proteins to the basal RNA polymerase II transcription machinery. Mediator is recruited to promoters by direct interactions with regulatory proteins and serves as a scaffold for the assembly of a functional preinitiation complex with RNA polymerase II and the general transcription factors. This is Mediator of RNA polymerase II transcription subunit 19 (ROX3) from Yarrowia lipolytica (strain CLIB 122 / E 150) (Yeast).